A 331-amino-acid polypeptide reads, in one-letter code: Probable tRNA pseudouridine synthase B (331 aa).

Asp-66 functions as the Nucleophile in the catalytic mechanism. The PUA domain occupies 233–307; that stretch reads INKIIVKDSA…NEEDNREKYK (75 aa).

The protein belongs to the pseudouridine synthase TruB family. Type 2 subfamily.

The catalysed reaction is uridine(55) in tRNA = pseudouridine(55) in tRNA. In terms of biological role, could be responsible for synthesis of pseudouridine from uracil-55 in the psi GC loop of transfer RNAs. This chain is Probable tRNA pseudouridine synthase B, found in Methanococcus aeolicus (strain ATCC BAA-1280 / DSM 17508 / OCM 812 / Nankai-3).